A 239-amino-acid polypeptide reads, in one-letter code: Tetrahydromethanopterin S-methyltransferase subunit A (239 aa).

At 1-215 the chain is on the cytoplasmic side; that stretch reads MANKKSPAAT…EAAMIAKFNS (215 aa). His-85 is a 5-hydroxybenzimidazolylcob(I)amide binding site. A helical membrane pass occupies residues 216–238; sequence GYYNGKIQGIAIGLFLSILVFSL. Residue Leu-239 is a topological domain, extracellular.

Belongs to the MtrA family. In terms of assembly, the complex is composed of 8 subunits; MtrA, MtrB, MtrC, MtrD, MtrE, MtrF, MtrG and MtrH. The cofactor is 5-hydroxybenzimidazolylcob(I)amide.

Its subcellular location is the cell membrane. The enzyme catalyses 5-methyl-5,6,7,8-tetrahydromethanopterin + coenzyme M + 2 Na(+)(in) = 5,6,7,8-tetrahydromethanopterin + methyl-coenzyme M + 2 Na(+)(out). It functions in the pathway one-carbon metabolism; methanogenesis from CO(2); methyl-coenzyme M from 5,10-methylene-5,6,7,8-tetrahydromethanopterin: step 2/2. Part of a complex that catalyzes the formation of methyl-coenzyme M and tetrahydromethanopterin from coenzyme M and methyl-tetrahydromethanopterin. This is an energy-conserving, sodium-ion translocating step. This is Tetrahydromethanopterin S-methyltransferase subunit A from Methanococcus maripaludis (strain C7 / ATCC BAA-1331).